A 187-amino-acid polypeptide reads, in one-letter code: MKGSSEHGETSKQAPLGSSRGVSKGVSVLDLILRFIAIIGTLASAIAMGTTNETLPFFTQFIRFKAQYSDLPTLTFFVVANSIVCAYLTLSLPLSIVHIIRSRAKYSRLLLVVLDAAMLALVTPGASAAAAIVYLAHKGNVRANWLAICQQFDSFCERISGCLIGSFGAMVMLVLLLLLSAIALARR.

A compositionally biased stretch (basic and acidic residues) spans 1–10 (MKGSSEHGET). Residues 1 to 20 (MKGSSEHGETSKQAPLGSSR) are disordered. At 1–27 (MKGSSEHGETSKQAPLGSSRGVSKGVS) the chain is on the cytoplasmic side. Residues 28–48 (VLDLILRFIAIIGTLASAIAM) form a helical membrane-spanning segment. The Extracellular segment spans residues 49-75 (GTTNETLPFFTQFIRFKAQYSDLPTLT). Asn52 carries an N-linked (GlcNAc...) asparagine glycan. A helical membrane pass occupies residues 76–96 (FFVVANSIVCAYLTLSLPLSI). Over 97–115 (VHIIRSRAKYSRLLLVVLD) the chain is Cytoplasmic. Residues 116 to 136 (AAMLALVTPGASAAAAIVYLA) form a helical membrane-spanning segment. Residues 137–162 (HKGNVRANWLAICQQFDSFCERISGC) lie on the Extracellular side of the membrane. A helical membrane pass occupies residues 163 to 183 (LIGSFGAMVMLVLLLLLSAIA). Residues 184-187 (LARR) are Cytoplasmic-facing.

The protein belongs to the Casparian strip membrane proteins (CASP) family. Homodimer and heterodimers.

Its subcellular location is the cell membrane. Functionally, regulates membrane-cell wall junctions and localized cell wall deposition. Required for establishment of the Casparian strip membrane domain (CSD) and the subsequent formation of Casparian strips, a cell wall modification of the root endodermis that determines an apoplastic barrier between the intraorganismal apoplasm and the extraorganismal apoplasm and prevents lateral diffusion. In Zea mays (Maize), this protein is Casparian strip membrane protein 1.